The primary structure comprises 273 residues: Putative carboxypeptidase YodJ (273 aa).

Positions 1–23 (MKKSGKWFSLAAALSVTAIVGAG) are cleaved as a signal peptide. C24 carries the N-palmitoyl cysteine lipid modification. A lipid anchor (S-diacylglycerol cysteine) is attached at C24. The disordered stretch occupies residues 27–58 (SNGDAQKDTKTTAETKQTEQKTADSKKSNTQN). Basic and acidic residues predominate over residues 31–53 (AQKDTKTTAETKQTEQKTADSKK).

Belongs to the peptidase M15B family.

It localises to the cell membrane. The sequence is that of Putative carboxypeptidase YodJ (yodJ) from Bacillus subtilis (strain 168).